Here is a 228-residue protein sequence, read N- to C-terminus: MAGRGGTGAAEYGEEGEEEEEEEAREGGAEGSPGSKLPPIVGTASELAKRKVKKKKKKKKTKGSGKGDADKHHSRGRKNQPLSSSFHDILNPHKDHGLRAEPRDKEENRQTLPYSYSINHPCFAEIEDTLSSQINESLRWDGILTDPEAEKERIRIYKLNRRKRYRLMALKCFHSDPCVEESVENLPYLSDKDCSPCSKQPSSKGDHAHSYFEASKLLHPELATTVAE.

Positions 1–108 (MAGRGGTGAA…RAEPRDKEEN (108 aa)) are disordered. The span at 12 to 24 (YGEEGEEEEEEEA) shows a compositional bias: acidic residues. The lysine-rich domain stretch occupies residues 49-71 (KRKVKKKKKKKKTKGSGKGDADK). Over residues 50 to 63 (RKVKKKKKKKKTKG) the composition is skewed to basic residues. The segment covering 90-108 (LNPHKDHGLRAEPRDKEEN) has biased composition (basic and acidic residues). Positions 113–165 (PYSYSINHPCFAEIEDTLSSQINESLRWDGILTDPEAEKERIRIYKLNRRKRY) are interaction with ATE1. Repeat unit 1 spans residues 169-178 (ALKCFHSDPC).

Self-associates (via Lys-rich domain); targets LIAT1 to the nucleolus. Interacts with ATE1; it is not a substrate of ATE1, the interaction takes place in the cytoplasm and seems to increase ATE1 arginyltransferase activity. Interacts with JMJD6 and MRPS14. Post-translationally, post-translationally modified by JMJD6 lysyl-hydroxylase activity at its Lys-rich domain, which inhibits its self-association and nucleolar localization. As to expression, highly expressed in spleen, thymus, liver and brown adipose tissue. Moderately expressed in liver, testis and lung.

The protein resides in the nucleus. It localises to the nucleolus. It is found in the cytoplasm. Its function is as follows. Participates in nucleolar liquid-liquid phase separation (LLPS) through its N-terminal intrinsically disordered region (IDR). May be involved in ATE1-mediated N-terminal arginylation. The protein is Protein LIAT1 of Mus musculus (Mouse).